The primary structure comprises 871 residues: Metabotropic glutamate receptor 6 (871 aa).

The signal sequence occupies residues 1–23 (MGRLPVLLLWLAWWLSQAGIACG). The Extracellular portion of the chain corresponds to 24-579 (AGSVRLAGGL…VVRLTWSSPW (556 aa)). Cysteines 51 and 93 form a disulfide. L-glutamate contacts are provided by residues S148, 169-171 (AST), and Y219. 7 cysteine pairs are disulfide-bonded: C238–C530, C361–C377, C417–C424, C512–C531, C516–C534, C537–C549, and C552–C565. Residue N290 is glycosylated (N-linked (GlcNAc...) asparagine). D301 lines the L-glutamate pocket. K394 provides a ligand contact to L-glutamate. N-linked (GlcNAc...) asparagine glycans are attached at residues N445 and N473. N561 carries an N-linked (GlcNAc...) asparagine glycan. The helical transmembrane segment at 580–602 (AALPLLLAVLGIMATTTIMATFM) threads the bilayer. Residues 603 to 616 (RHNDTPIVRASGRE) are Cytoplasmic-facing. Residues 617–637 (LSYVLLTGIFLIYAITFLMVA) traverse the membrane as a helical segment. Residues 638–648 (EPCAAICAARR) lie on the Extracellular side of the membrane. The helical transmembrane segment at 649–667 (LLLGLGTTLSYSALLTKTN) threads the bilayer. The Cytoplasmic segment spans residues 668 to 691 (RIYRIFEQGKRSVTPPPFISPTSQ). A helical membrane pass occupies residues 692–712 (LVITFGLTSLQVVGVIAWLGA). Topologically, residues 713 to 742 (QPPHSVIDYEEQRTVDPEQARGVLKCDMSD) are extracellular. Residues 743–764 (LSLIGCLGYSLLLMVTCTVYAI) form a helical membrane-spanning segment. Residues 765-777 (KARGVPETFNEAK) lie on the Cytoplasmic side of the membrane. Residues 778–800 (PIGFTMYTTCIIWLAFVPIFFGT) form a helical membrane-spanning segment. Over 801 to 813 (AQSAEKIYIQTTT) the chain is Extracellular. A helical transmembrane segment spans residues 814–839 (LTVSLSLSASVSLGMLYVPKTYVILF). Over 840–871 (HPEQNVQKRKRSLKKTSTMAAPPQNENAEDAK) the chain is Cytoplasmic. The tract at residues 850-871 (RSLKKTSTMAAPPQNENAEDAK) is disordered.

The protein belongs to the G-protein coupled receptor 3 family. Homodimer. Interacts with GPR179. Interacts with photoreceptor synaptic protein LRIT1 (via its N-terminal extracellular domain). In terms of tissue distribution, restricted expression in the inner nuclear layer of the retina.

The protein localises to the cell membrane. Its subcellular location is the endoplasmic reticulum membrane. It localises to the golgi apparatus membrane. It is found in the cell projection. The protein resides in the dendrite. Functionally, G-protein coupled receptor for glutamate. Ligand binding causes a conformation change that triggers signaling via guanine nucleotide-binding proteins (G proteins) and modulates the activity of down-stream effectors, such as adenylate cyclase. Signaling inhibits adenylate cyclase activity. Signaling stimulates TRPM1 channel activity and Ca(2+) uptake. Required for normal vision. This Rattus norvegicus (Rat) protein is Metabotropic glutamate receptor 6 (Grm6).